A 438-amino-acid polypeptide reads, in one-letter code: Thymidine phosphorylase (438 aa).

It belongs to the thymidine/pyrimidine-nucleoside phosphorylase family. As to quaternary structure, homodimer.

It carries out the reaction thymidine + phosphate = 2-deoxy-alpha-D-ribose 1-phosphate + thymine. It participates in pyrimidine metabolism; dTMP biosynthesis via salvage pathway; dTMP from thymine: step 1/2. In terms of biological role, the enzymes which catalyze the reversible phosphorolysis of pyrimidine nucleosides are involved in the degradation of these compounds and in their utilization as carbon and energy sources, or in the rescue of pyrimidine bases for nucleotide synthesis. This is Thymidine phosphorylase from Burkholderia orbicola (strain MC0-3).